Reading from the N-terminus, the 140-residue chain is Anti-sigma F factor (140 aa).

Belongs to the anti-sigma-factor family.

The catalysed reaction is L-seryl-[protein] + ATP = O-phospho-L-seryl-[protein] + ADP + H(+). It carries out the reaction L-threonyl-[protein] + ATP = O-phospho-L-threonyl-[protein] + ADP + H(+). In terms of biological role, binds to sigma F and blocks its ability to form an RNA polymerase holoenzyme (E-sigma F). Phosphorylates SpoIIAA on a serine residue. This phosphorylation may enable SpoIIAA to act as an anti-anti-sigma factor that counteracts SpoIIAB and thus releases sigma F from inhibition. The sequence is that of Anti-sigma F factor from Clostridium perfringens (strain SM101 / Type A).